The chain runs to 269 residues: Shikimate dehydrogenase (NADP(+)) (269 aa).

Residues 13-15 (SLS) and Thr-60 each bind shikimate. The Proton acceptor role is filled by Lys-64. Glu-76 contributes to the NADP(+) binding site. Asn-85 and Asp-100 together coordinate shikimate. Residues 124–128 (GAGGA), 148–153 (NRTMSR), and Ile-209 each bind NADP(+). Tyr-211 serves as a coordination point for shikimate. Gly-232 lines the NADP(+) pocket. Gln-239 is a binding site for shikimate.

The protein belongs to the shikimate dehydrogenase family. As to quaternary structure, monomer or homodimer.

It carries out the reaction shikimate + NADP(+) = 3-dehydroshikimate + NADPH + H(+). The protein operates within metabolic intermediate biosynthesis; chorismate biosynthesis; chorismate from D-erythrose 4-phosphate and phosphoenolpyruvate: step 4/7. In terms of biological role, involved in the biosynthesis of the chorismate, which leads to the biosynthesis of aromatic amino acids. Catalyzes the reversible NADPH linked reduction of 3-dehydroshikimate (DHSA) to yield shikimate (SA). It can also use NAD to oxidize shikimate. In Staphylococcus epidermidis (strain ATCC 35984 / DSM 28319 / BCRC 17069 / CCUG 31568 / BM 3577 / RP62A), this protein is Shikimate dehydrogenase (NADP(+)).